The primary structure comprises 329 residues: Ketol-acid reductoisomerase (NADP(+)) (329 aa).

Residues 2-182 form the KARI N-terminal Rossmann domain; that stretch reads VEIYYDDDAS…GGTRAGALRT (181 aa). NADP(+) is bound by residues 25–28, Ser51, and Ser53; that span reads YGSQ. His108 is a catalytic residue. Gly134 provides a ligand contact to NADP(+). Residues 183 to 328 form the KARI C-terminal knotted domain; sequence TFTEETETDL…AKLRPMMSWI (146 aa). Asp191, Glu195, Glu227, and Glu231 together coordinate Mg(2+). Ser252 serves as a coordination point for substrate.

Belongs to the ketol-acid reductoisomerase family. Mg(2+) serves as cofactor.

The enzyme catalyses (2R)-2,3-dihydroxy-3-methylbutanoate + NADP(+) = (2S)-2-acetolactate + NADPH + H(+). The catalysed reaction is (2R,3R)-2,3-dihydroxy-3-methylpentanoate + NADP(+) = (S)-2-ethyl-2-hydroxy-3-oxobutanoate + NADPH + H(+). Its pathway is amino-acid biosynthesis; L-isoleucine biosynthesis; L-isoleucine from 2-oxobutanoate: step 2/4. It participates in amino-acid biosynthesis; L-valine biosynthesis; L-valine from pyruvate: step 2/4. In terms of biological role, involved in the biosynthesis of branched-chain amino acids (BCAA). Catalyzes an alkyl-migration followed by a ketol-acid reduction of (S)-2-acetolactate (S2AL) to yield (R)-2,3-dihydroxy-isovalerate. In the isomerase reaction, S2AL is rearranged via a Mg-dependent methyl migration to produce 3-hydroxy-3-methyl-2-ketobutyrate (HMKB). In the reductase reaction, this 2-ketoacid undergoes a metal-dependent reduction by NADPH to yield (R)-2,3-dihydroxy-isovalerate. The polypeptide is Ketol-acid reductoisomerase (NADP(+)) (Frankia casuarinae (strain DSM 45818 / CECT 9043 / HFP020203 / CcI3)).